Here is a 412-residue protein sequence, read N- to C-terminus: Angiopoietin-related protein 4 (412 aa).

An N-terminal signal peptide occupies residues Met1–Ala23. A coiled-coil region spans residues Glu106–Leu153. Asn183 carries an N-linked (GlcNAc...) asparagine glycan. Residues Ser185–Val407 enclose the Fibrinogen C-terminal domain. Disulfide bonds link Cys194–Cys222 and Cys347–Cys360.

As to quaternary structure, homooligomer; disulfide-linked via Cys residues in the N-terminal part of the protein. The homooligomer undergoes proteolytic processing to release the ANGPTL4 C-terminal chain, which circulates as a monomer. The homooligomer unprocessed form is able to interact with the extracellular matrix. Post-translationally, N-glycosylated. Forms disulfide-linked dimers and tetramers. In terms of processing, cleaved into a smaller N-terminal chain and a larger chain that contains the fibrinogen C-terminal domain; both cleaved and uncleaved forms are detected in the extracellular space. The cleaved form is not present within the cell.

It localises to the secreted. Its subcellular location is the extracellular space. It is found in the extracellular matrix. In terms of biological role, mediates inactivation of the lipoprotein lipase LPL, and thereby plays a role in the regulation of triglyceride clearance from the blood serum and in lipid metabolism. May also play a role in regulating glucose homeostasis and insulin sensitivity. Inhibits proliferation, migration, and tubule formation of endothelial cells and reduces vascular leakage. Upon heterologous expression, inhibits the adhesion of endothelial cell to the extracellular matrix (ECM), and inhibits the reorganization of the actin cytoskeleton, formation of actin stress fibers and focal adhesions in endothelial cells that have adhered to ANGPTL4-containing ECM (in vitro). Depending on context, may modulate tumor-related angiogenesis. Its function is as follows. Mediates inactivation of the lipoprotein lipase LPL, and thereby plays an important role in the regulation of triglyceride clearance from the blood serum and in lipid metabolism. Has higher activity in LPL inactivation than the uncleaved protein. The protein is Angiopoietin-related protein 4 (ANGPTL4) of Sus scrofa (Pig).